The following is a 202-amino-acid chain: Putative transmembrane protein ORF202 (202 aa).

Helical transmembrane passes span 13-33 (AIAFGLAYSILEVNVPLFHYI), 40-60 (VFYLIIFAIANMTLPLSLFLG), 87-107 (YYPVIDGIPIADVIEVIISVF), 156-176 (YGALTLVLVSVLAILSSHSLS), and 177-197 (LTAFATLSLIVGTGIFVDLWA).

The protein resides in the host membrane. This chain is Putative transmembrane protein ORF202, found in Acidianus filamentous virus 2 (isolate Italy/Pozzuoli) (AFV-2).